A 220-amino-acid chain; its full sequence is Elongation factor Ts, chloroplastic (220 aa).

It belongs to the EF-Ts family.

The protein resides in the plastid. The protein localises to the chloroplast. In terms of biological role, associates with the EF-Tu.GDP complex and induces the exchange of GDP to GTP. It remains bound to the aminoacyl-tRNA.EF-Tu.GTP complex up to the GTP hydrolysis stage on the ribosome. The protein is Elongation factor Ts, chloroplastic (tsf) of Porphyra purpurea (Red seaweed).